Consider the following 490-residue polypeptide: Ribosomal L1 domain-containing protein 1 (490 aa).

M1 bears the N-acetylmethionine mark. The span at 1–27 shows a compositional bias: low complexity; that stretch reads MEDSASASLSSAAATGTSTSTPAAPTA. The disordered stretch occupies residues 1–33; sequence MEDSASASLSSAAATGTSTSTPAAPTARKQLDK. Glycyl lysine isopeptide (Lys-Gly) (interchain with G-Cter in SUMO2) cross-links involve residues K120 and K254. A compositionally biased stretch (basic residues) spans 280-293; it reads LNKKKKEARRKRRE. The stretch at 280 to 313 forms a coiled coil; sequence LNKKKKEARRKRRERNFEKQKERKKKRQQARKTA. Positions 280-490 are disordered; that stretch reads LNKKKKEARR…PKKPKVPQST (211 aa). Over residues 329-343 the composition is skewed to basic and acidic residues; the sequence is TVKKPESKKEQTPEH. Phosphothreonine is present on T340. The segment covering 344–353 has biased composition (basic residues); sequence GKKKRGRGKA. Phosphothreonine is present on T358. Residue S361 is modified to Phosphoserine. T375 carries the phosphothreonine modification. Residues 376–385 are compositionally biased toward basic and acidic residues; that stretch reads PANEKVEIQK. A Glycyl lysine isopeptide (Lys-Gly) (interchain with G-Cter in SUMO2) cross-link involves residue K380. Phosphoserine occurs at positions 392 and 396. A phosphothreonine mark is found at T415 and T423. S427 carries the phosphoserine modification. Over residues 427 to 460 the composition is skewed to basic and acidic residues; that stretch reads SPEKKPKIKEEAVKEKSPSLGKKDARQTPKKPEA. K435 is covalently cross-linked (Glycyl lysine isopeptide (Lys-Gly) (interchain with G-Cter in SUMO2)). Phosphoserine is present on S443. A Glycyl lysine isopeptide (Lys-Gly) (interchain with G-Cter in SUMO2) cross-link involves residue K461. T465 is modified (phosphothreonine). N6-acetyllysine is present on K468. S469 is modified (phosphoserine). The span at 469–490 shows a compositional bias: basic residues; it reads SVRKASHTPKKWPKKPKVPQST.

It belongs to the universal ribosomal protein uL1 family. Highly divergent. Interacts with ING1 (isoform 2). Interacts with KPNA7 and KPNA2. As to expression, expressed at high intensities in the heart, skeletal muscle, and placenta.

It localises to the nucleus. The protein resides in the nucleolus. Its function is as follows. Regulates cellular senescence through inhibition of PTEN translation. Acts as a pro-apoptotic regulator in response to DNA damage. This Homo sapiens (Human) protein is Ribosomal L1 domain-containing protein 1 (RSL1D1).